The sequence spans 414 residues: Dimethylsulfoniopropionate lyase DddY (414 aa).

Positions 1–18 (MKYMVLFSGLLFSNVLVA) are cleaved as a signal peptide.

It belongs to the DMSP lyase DddY family.

The protein resides in the periplasm. The catalysed reaction is S,S-dimethyl-beta-propiothetin = acrylate + dimethyl sulfide + H(+). Functionally, catalyzes the cleavage of dimethylsulfoniopropionate (DMSP) into dimethyl sulfide (DMS) and acrylate. The sequence is that of Dimethylsulfoniopropionate lyase DddY from Shewanella woodyi (strain ATCC 51908 / MS32).